We begin with the raw amino-acid sequence, 311 residues long: Olfactory receptor-like protein OLF1 (311 aa).

The Extracellular portion of the chain corresponds to 1–24 (MDGNYTLVTEFILLGFPTRPELQI). Asparagine 4 carries an N-linked (GlcNAc...) asparagine glycan. A helical membrane pass occupies residues 25 to 48 (VLFLVFLTLYGIILTGNIGLMMLI). Residues 49–56 (RTDPHLQT) are Cytoplasmic-facing. Residues 57–78 (PMYFFLSNLSFADLCFSSAIVP) form a helical membrane-spanning segment. Residues 79–99 (KMLVNFLSENKSISLYGCALQ) are Extracellular-facing. A helical membrane pass occupies residues 100 to 119 (FYFSCAFADTESFILAAMAY). Over 120 to 138 (DRYVAICNPLLYTVVMSRG) the chain is Cytoplasmic. Residues 139 to 157 (ICVWLIVLSYIGGNMSSLV) traverse the membrane as a helical segment. The Extracellular segment spans residues 158 to 195 (HTSFAFILKYCDKNVINHFFCDLPPLLKLSCTDTSVNE). Residues 196 to 218 (WLLSTYGSSVEIFCFIVIVISYY) traverse the membrane as a helical segment. The Cytoplasmic segment spans residues 219 to 235 (FILRSVLRIRSSSGRKK). The chain crosses the membrane as a helical span at residues 236-259 (TFSTCASHLTSVAIYQGTLLFIYS). The Extracellular portion of the chain corresponds to 260 to 271 (RPTYLYTPNTDK). Residues 272-291 (IISVFYTIIIPVLNPLIYSL) form a helical membrane-spanning segment. Residues 292–311 (RNKDVKDAAKRAVRLKVDSS) are Cytoplasmic-facing.

Belongs to the G-protein coupled receptor 1 family.

The protein localises to the cell membrane. In terms of biological role, putative odorant or sperm cell receptor. This chain is Olfactory receptor-like protein OLF1, found in Canis lupus familiaris (Dog).